A 207-amino-acid chain; its full sequence is Guanylate kinase (207 aa).

The region spanning 4 to 184 (GTLYIVSAPS…AQMDFRSIIR (181 aa)) is the Guanylate kinase-like domain. 11–18 (APSGAGKS) lines the ATP pocket.

It belongs to the guanylate kinase family.

The protein resides in the cytoplasm. The enzyme catalyses GMP + ATP = GDP + ADP. Its function is as follows. Essential for recycling GMP and indirectly, cGMP. This Aliivibrio fischeri (strain ATCC 700601 / ES114) (Vibrio fischeri) protein is Guanylate kinase.